The following is a 336-amino-acid chain: tRNA-dihydrouridine(20/20a) synthase (336 aa).

FMN-binding positions include Pro24–Met26 and Gln77. Cys107 serves as the catalytic Proton donor. FMN-binding positions include Lys146, His178, Asn218–Gly220, and Gly240–Arg241.

Belongs to the Dus family. DusA subfamily. The cofactor is FMN.

The catalysed reaction is 5,6-dihydrouridine(20) in tRNA + NADP(+) = uridine(20) in tRNA + NADPH + H(+). The enzyme catalyses 5,6-dihydrouridine(20) in tRNA + NAD(+) = uridine(20) in tRNA + NADH + H(+). It carries out the reaction 5,6-dihydrouridine(20a) in tRNA + NADP(+) = uridine(20a) in tRNA + NADPH + H(+). It catalyses the reaction 5,6-dihydrouridine(20a) in tRNA + NAD(+) = uridine(20a) in tRNA + NADH + H(+). Its function is as follows. Catalyzes the synthesis of 5,6-dihydrouridine (D), a modified base found in the D-loop of most tRNAs, via the reduction of the C5-C6 double bond in target uridines. Specifically modifies U20 and U20a in tRNAs. The chain is tRNA-dihydrouridine(20/20a) synthase from Pseudomonas syringae pv. tomato (strain ATCC BAA-871 / DC3000).